Consider the following 1421-residue polypeptide: Cytoadherence-linked asexual protein 3.2 (1421 aa).

Positions 1–24 (MVSFFKTPIIIFFFLLCLNEKVLC) are cleaved as a signal peptide. 4 cysteine pairs are disulfide-bonded: Cys-335–Cys-363, Cys-409–Cys-415, Cys-519–Cys-547, and Cys-523–Cys-544. A helical membrane pass occupies residues 1203-1223 (NFFMELANGFMYAFCFFAISQ). The cysteines at positions 1352 and 1355 are disulfide-linked. Residues 1371–1413 (GDKNTNETTEIKKQTSTYIDTEKMNEADSADSDDEKDFDTPDN) are disordered. The segment covering 1398–1412 (DSADSDDEKDFDTPD) has biased composition (acidic residues).

In terms of assembly, component of the RhopH complex. RhopH complex is at least composed of CLAG3.1/CLAG3.2, RhopH2 and RhopH3 with a 1:1:1 subunit stoichiometry. CLAG3.1/CLAG3.2 mediates subunit association through independent contacts with RhopH2 and RhopH3, which do not directly interact with one another. Interacts with RhopH2. Interacts with RhopH3.

It localises to the host cell membrane. Its subcellular location is the parasitophorous vacuole membrane. It is found in the host cytoplasm. The protein localises to the cytoplasmic vesicle. The protein resides in the secretory vesicle. It localises to the rhoptry. Its function is as follows. Participates in the formation of new permeability pathways in Plasmodium-infected erythrocytes enabling the uptake of nutrients from the blood plasma. In Plasmodium falciparum, this protein is Cytoadherence-linked asexual protein 3.2.